Here is a 159-residue protein sequence, read N- to C-terminus: Endoribonuclease YbeY (159 aa).

The Zn(2+) site is built by H114, H118, and H124.

Belongs to the endoribonuclease YbeY family. The cofactor is Zn(2+).

The protein localises to the cytoplasm. Functionally, single strand-specific metallo-endoribonuclease involved in late-stage 70S ribosome quality control and in maturation of the 3' terminus of the 16S rRNA. This Pectobacterium carotovorum subsp. carotovorum (strain PC1) protein is Endoribonuclease YbeY.